A 410-amino-acid polypeptide reads, in one-letter code: MSHDPVVPSAPATDGGATDGPRLGVVVVAAGSGTRLGAGIPKALVEVGGVTLLARSLSSVLGLAEEAHVVVVAPDTHLAETSAVVDAVAGAARGSVAVVVGGATRQGSVRAGLAALVGSVDTVLVHDAARALTPTDLFAAVARAVRAEGAGVVPGLPVTDTVKRVDPAGECLGTVDRSDLVGVQTPQGFPRAALDAAYARAAAEHTDDAALFQASGGRVRVIPGDALAFKVTTAWDLRRAEELVARDAGAGSASSRLRSGIGTDVHAVDASQPLWLAGLHWPGEAGLAGHSDGDAVSHAMCDALLSAAGLGDIGGIFGTDDPELDGAHGEVFLRRTAELVRDAGYRIVNVAVQVMAVRPKLSPRRAEAERILSAAVGAPVSLAGTTTDGLGFTGRGDGVAAVATALVERL.

The segment at 1–257 is 2-C-methyl-D-erythritol 4-phosphate cytidylyltransferase; that stretch reads MSHDPVVPSA…AGAGSASSRL (257 aa). The interval 258–410 is 2-C-methyl-D-erythritol 2,4-cyclodiphosphate synthase; sequence RSGIGTDVHA…AVATALVERL (153 aa). Asp264 and His266 together coordinate a divalent metal cation. 4-CDP-2-C-methyl-D-erythritol 2-phosphate-binding positions include 264–266 and 290–291; these read DVH and HS. His298 is an a divalent metal cation binding site. 4-CDP-2-C-methyl-D-erythritol 2-phosphate is bound by residues 312–314, 385–388, Phe392, and Arg395; these read DIG and TTTD.

In the N-terminal section; belongs to the IspD/TarI cytidylyltransferase family. IspD subfamily. This sequence in the C-terminal section; belongs to the IspF family. A divalent metal cation is required as a cofactor.

It catalyses the reaction 2-C-methyl-D-erythritol 4-phosphate + CTP + H(+) = 4-CDP-2-C-methyl-D-erythritol + diphosphate. The catalysed reaction is 4-CDP-2-C-methyl-D-erythritol 2-phosphate = 2-C-methyl-D-erythritol 2,4-cyclic diphosphate + CMP. It functions in the pathway isoprenoid biosynthesis; isopentenyl diphosphate biosynthesis via DXP pathway; isopentenyl diphosphate from 1-deoxy-D-xylulose 5-phosphate: step 2/6. Its pathway is isoprenoid biosynthesis; isopentenyl diphosphate biosynthesis via DXP pathway; isopentenyl diphosphate from 1-deoxy-D-xylulose 5-phosphate: step 4/6. Functionally, bifunctional enzyme that catalyzes the formation of 4-diphosphocytidyl-2-C-methyl-D-erythritol from CTP and 2-C-methyl-D-erythritol 4-phosphate (MEP) (IspD), and catalyzes the conversion of 4-diphosphocytidyl-2-C-methyl-D-erythritol 2-phosphate (CDP-ME2P) to 2-C-methyl-D-erythritol 2,4-cyclodiphosphate (ME-CPP) with a corresponding release of cytidine 5-monophosphate (CMP) (IspF). The polypeptide is Bifunctional enzyme IspD/IspF (Clavibacter michiganensis subsp. michiganensis (strain NCPPB 382)).